The sequence spans 698 residues: Elongation factor G (698 aa).

A tr-type G domain is found at 8 to 290; that stretch reads ERYRNIGISA…AVIELLPSPT (283 aa). GTP is bound by residues 17 to 24, 88 to 92, and 142 to 145; these read AHIDAGKT, DTPGH, and NKMD.

Belongs to the TRAFAC class translation factor GTPase superfamily. Classic translation factor GTPase family. EF-G/EF-2 subfamily.

Its subcellular location is the cytoplasm. In terms of biological role, catalyzes the GTP-dependent ribosomal translocation step during translation elongation. During this step, the ribosome changes from the pre-translocational (PRE) to the post-translocational (POST) state as the newly formed A-site-bound peptidyl-tRNA and P-site-bound deacylated tRNA move to the P and E sites, respectively. Catalyzes the coordinated movement of the two tRNA molecules, the mRNA and conformational changes in the ribosome. This chain is Elongation factor G, found in Chromobacterium violaceum (strain ATCC 12472 / DSM 30191 / JCM 1249 / CCUG 213 / NBRC 12614 / NCIMB 9131 / NCTC 9757 / MK).